The primary structure comprises 57 residues: Phospholipase A2 superbin b (57 aa).

Residues Tyr28, Gly30, and Gly32 each coordinate Ca(2+). A disulfide bridge connects residues Cys29 and Cys45. The active site involves His48. Residue Asp49 participates in Ca(2+) binding.

Requires Ca(2+) as cofactor. As to expression, expressed by the venom gland.

Its subcellular location is the secreted. It catalyses the reaction a 1,2-diacyl-sn-glycero-3-phosphocholine + H2O = a 1-acyl-sn-glycero-3-phosphocholine + a fatty acid + H(+). Functionally, snake venom phospholipase A2 (PLA2) that inhibits collagen-induced platelet aggregation. In terms of inhibition of platelet aggregation, superbin b is more potent as superbin c, and d. PLA2 catalyzes the calcium-dependent hydrolysis of the 2-acyl groups in 3-sn-phosphoglycerides. The chain is Phospholipase A2 superbin b from Austrelaps superbus (Lowland copperhead snake).